Here is a 463-residue protein sequence, read N- to C-terminus: FAD-dependent monooxygenase ausM (463 aa).

Positions 40, 54, and 113 each coordinate FAD. The active site involves Tyr-217. FAD is bound by residues Asp-309 and Ala-322. The chain crosses the membrane as a helical span at residues 443–463 (VPWLVISLPVLASVLCYLMFA).

Belongs to the paxM FAD-dependent monooxygenase family. It depends on FAD as a cofactor.

Its subcellular location is the membrane. Its pathway is secondary metabolite biosynthesis; terpenoid biosynthesis. In terms of biological role, FAD-dependent monooxygenase; part of the gene cluster that mediates the biosynthesis of calidodehydroaustin, a fungal meroterpenoid. The first step of the pathway is the synthesis of 3,5-dimethylorsellinic acid by the polyketide synthase ausA. 3,5-dimethylorsellinic acid is then prenylated by the polyprenyl transferase ausN. Further epoxidation by the FAD-dependent monooxygenase ausM and cyclization by the probable terpene cyclase ausL lead to the formation of protoaustinoid A. Protoaustinoid A is then oxidized to spiro-lactone preaustinoid A3 by the combined action of the FAD-binding monooxygenases ausB and ausC, and the dioxygenase ausE. Acid-catalyzed keto-rearrangement and ring contraction of the tetraketide portion of preaustinoid A3 by ausJ lead to the formation of preaustinoid A4. The aldo-keto reductase ausK, with the help of ausH, is involved in the next step by transforming preaustinoid A4 into isoaustinone which is in turn hydroxylated by the P450 monooxygenase ausI to form austinolide. The cytochrome P450 monooxygenase ausG modifies austinolide to austinol. Austinol is further acetylated to austin by the O-acetyltransferase ausP, which spontaneously changes to dehydroaustin. The cytochrome P450 monooxygenase ausR then converts dehydroaustin is into 7-dehydrodehydroaustin. The hydroxylation catalyzed by ausR permits the O-acetyltransferase ausQ to add an additional acetyl group to the molecule, leading to the formation of acetoxydehydroaustin. The short chain dehydrogenase ausT catalyzes the reduction of the double bond present between carbon atoms 1 and 2 to convert 7-dehydrodehydroaustin into 1,2-dihydro-7-hydroxydehydroaustin. AusQ catalyzes not only an acetylation reaction but also the addition of the PKS ausV diketide product to 1,2-dihydro-7-hydroxydehydroaustin, forming precalidodehydroaustin. Finally, the iron/alpha-ketoglutarate-dependent dioxygenase converts precalidodehydroaustin into calidodehydroaustin. In Aspergillus calidoustus, this protein is FAD-dependent monooxygenase ausM.